A 253-amino-acid chain; its full sequence is uncharacterized protein (253 aa).

The first 19 residues, 1–19 (MRYLKKVTIYISLLILVSG), serve as a signal peptide directing secretion. Cys20 carries the N-palmitoyl cysteine lipid modification. A lipid anchor (S-diacylglycerol cysteine) is attached at Cys20.

The protein belongs to the staphylococcal tandem lipoprotein family.

The protein resides in the cell membrane. This is an uncharacterized protein from Staphylococcus epidermidis (strain ATCC 35984 / DSM 28319 / BCRC 17069 / CCUG 31568 / BM 3577 / RP62A).